The chain runs to 165 residues: Phosphopantetheine adenylyltransferase (165 aa).

T10 is a binding site for substrate. Residues 10-11 (TF) and H18 each bind ATP. Positions 42, 75, and 89 each coordinate substrate. ATP is bound by residues 90–92 (GVR), E100, and 125–131 (YTYVAST).

Belongs to the bacterial CoaD family. In terms of assembly, homohexamer. It depends on Mg(2+) as a cofactor.

The protein resides in the cytoplasm. It carries out the reaction (R)-4'-phosphopantetheine + ATP + H(+) = 3'-dephospho-CoA + diphosphate. It functions in the pathway cofactor biosynthesis; coenzyme A biosynthesis; CoA from (R)-pantothenate: step 4/5. Its function is as follows. Reversibly transfers an adenylyl group from ATP to 4'-phosphopantetheine, yielding dephospho-CoA (dPCoA) and pyrophosphate. This Chlorobaculum tepidum (strain ATCC 49652 / DSM 12025 / NBRC 103806 / TLS) (Chlorobium tepidum) protein is Phosphopantetheine adenylyltransferase.